We begin with the raw amino-acid sequence, 836 residues long: Periostin (836 aa).

Positions 1 to 21 (MIPFLPMFSLLLLLIVNPINA) are cleaved as a signal peptide. Residues 40 to 94 (GPNVCALQQILGTKKKYFSTCKNWYKKSICGQKTTVLYECCPGYMRMEGMKGCPA) form the EMI domain. 5 disulfides stabilise this stretch: Cys44–Cys80, Cys69–Cys333, Cys79–Cys92, Cys208–Cys311, and Cys467–Cys472. Residue Cys60 is modified to S-cysteinyl cysteine. FAS1 domains follow at residues 97-230 (PIDH…DRVL), 234-365 (GTSI…DQVL), 368-492 (DSAK…REII), and 496-628 (EKSL…DKLL). The N-linked (GlcNAc...) asparagine glycan is linked to Asn599.

In terms of assembly, homodimer. Interacts with BMP1 and fibronectin. Gamma-carboxylation is controversial. Gamma-carboxyglutamated; gamma-carboxyglutamate residues are formed by vitamin K dependent carboxylation; this may be required for calcium binding. According to a more recent report, does not contain vitamin K-dependent gamma-carboxyglutamate residues. In terms of tissue distribution, widely expressed with highest levels in aorta, stomach, lower gastrointestinal tract, placenta, uterus, thyroid tissue and breast. Expressed in the kidney. Expressed in the lung. Up-regulated in epithelial ovarian tumors. Not expressed in normal ovaries. Also highly expressed at the tumor periphery of lung carcinoma tissue but not within the tumor. Overexpressed in breast cancers.

Its subcellular location is the golgi apparatus. The protein localises to the secreted. It is found in the extracellular space. The protein resides in the extracellular matrix. Functionally, induces cell attachment and spreading and plays a role in cell adhesion. Enhances incorporation of BMP1 in the fibronectin matrix of connective tissues, and subsequent proteolytic activation of lysyl oxidase LOX. The polypeptide is Periostin (POSTN) (Homo sapiens (Human)).